We begin with the raw amino-acid sequence, 169 residues long: Cilia- and flagella-associated protein HOATZ (169 aa).

3 disordered regions span residues 1-21 (METG…MCPP), 52-89 (SQLV…LASN), and 144-169 (KAKE…KTLD). Residues 75-89 (SENSHSSQSFHLASN) are compositionally biased toward polar residues.

The protein belongs to the HOATZ family.

It localises to the cytoplasm. It is found in the cell projection. The protein resides in the cilium. Required for motile ciliogenesis and flagellar genesis by mediating the maturation of the glycolytic enzyme ENO4. The protein is Cilia- and flagella-associated protein HOATZ of Homo sapiens (Human).